A 261-amino-acid polypeptide reads, in one-letter code: Putative [LysW]-aminoadipate/[LysW]-glutamate kinase (261 aa).

Substrate is bound by residues 35–36, arginine 62, and asparagine 162; that span reads GG.

This sequence belongs to the acetylglutamate kinase family. LysZ subfamily.

It is found in the cytoplasm. The enzyme catalyses [amino-group carrier protein]-C-terminal-N-(1,4-dicarboxybutan-1-yl)-L-glutamine + ATP = [amino-group carrier protein]-C-terminal-N-(1-carboxy-5-phosphooxy-5-oxopentan-1-yl)-L-glutamine + ADP. It carries out the reaction [amino-group carrier protein]-C-terminal-gamma-(L-glutamyl)-L-glutamate + ATP = [amino-group carrier protein]-C-terminal-gamma-(5-phospho-L-glutamyl)-L-glutamate + ADP. The protein operates within amino-acid biosynthesis; L-lysine biosynthesis via AAA pathway; L-lysine from L-alpha-aminoadipate (Thermus route): step 2/5. Its pathway is amino-acid biosynthesis; L-arginine biosynthesis. Functionally, involved in both the arginine and lysine biosynthetic pathways. Phosphorylates the LysW-bound precursors glutamate (for arginine biosynthesis), respectively alpha-aminoadipate (for lysine biosynthesis). The polypeptide is Putative [LysW]-aminoadipate/[LysW]-glutamate kinase (Pyrobaculum islandicum (strain DSM 4184 / JCM 9189 / GEO3)).